Reading from the N-terminus, the 319-residue chain is Methionyl-tRNA formyltransferase (319 aa).

113 to 116 (SLLP) contributes to the (6S)-5,6,7,8-tetrahydrofolate binding site.

It belongs to the Fmt family.

It carries out the reaction L-methionyl-tRNA(fMet) + (6R)-10-formyltetrahydrofolate = N-formyl-L-methionyl-tRNA(fMet) + (6S)-5,6,7,8-tetrahydrofolate + H(+). Attaches a formyl group to the free amino group of methionyl-tRNA(fMet). The formyl group appears to play a dual role in the initiator identity of N-formylmethionyl-tRNA by promoting its recognition by IF2 and preventing the misappropriation of this tRNA by the elongation apparatus. The protein is Methionyl-tRNA formyltransferase of Pseudomonas fluorescens (strain ATCC BAA-477 / NRRL B-23932 / Pf-5).